Here is a 177-residue protein sequence, read N- to C-terminus: Protein-export protein SecB (177 aa).

The disordered stretch occupies residues 1 to 22 (MSDENNSGAAAPEAQNPGQNAA). Low complexity predominate over residues 8–22 (GAAAPEAQNPGQNAA).

Belongs to the SecB family. In terms of assembly, homotetramer, a dimer of dimers. One homotetramer interacts with 1 SecA dimer.

It is found in the cytoplasm. Its function is as follows. One of the proteins required for the normal export of preproteins out of the cell cytoplasm. It is a molecular chaperone that binds to a subset of precursor proteins, maintaining them in a translocation-competent state. It also specifically binds to its receptor SecA. The protein is Protein-export protein SecB of Paracoccus denitrificans (strain Pd 1222).